Consider the following 493-residue polypeptide: MRSNTVILAALPLVASAASTSGNWGGGVNYSKIFGGGLSANASIHYPGQPDYNTTTVQRWSTWAEPTFAVTIKPATDEDVQYIIRTANKYNLTFLATGGGHGGETGFATVKHAVNIDLSNFKENVLDLEANTLTVGPGNSFSAFETNLYNAGKMVPVGNAFCVNMIGATIGAGVGPYQGLHGLVIDALRSVRLVTASGDIVTASDEENPDLFWAVRGAGANFGIITSATYEIFDAPNNGNVVLAEFAYPGSVNGSLWQLLESWGETYPKEMGLTMSASYSQTTGTTSSSASLTYFGTQEAAQPWIDQLLALNPTQWRNATLPWSEVSQNSGFGTGASVCATGKYNNHPSVGAKQTSVSTYIEVFNQYVEIMKARPWLTSALVVQRFNTTATLAVPESKRGVYPGRDFSSLIILENYYDGPRHDADVYRFSKKLRSQLVATSGFDSLQTYINYAHGDEGPEVWYGKDNLPRLVQLKRQWDPEGKFGPGNPIPLA.

An N-terminal signal peptide occupies residues 1 to 17 (MRSNTVILAALPLVASA). N-linked (GlcNAc...) asparagine glycans are attached at residues N29, N41, N53, N91, N253, N318, and N387. The 173-residue stretch at 63–235 (WAEPTFAVTI…TSATYEIFDA (173 aa)) folds into the FAD-binding PCMH-type domain.

This sequence belongs to the oxygen-dependent FAD-linked oxidoreductase family.

It participates in secondary metabolite biosynthesis. In terms of biological role, FAD-linked oxidoreductase; part of the gene cluster that mediates the biosynthesis of azaterrilone A and other azaphilones, a class of fungal metabolites characterized by a highly oxygenated pyrano-quinone bicyclic core and exhibiting a broad range of bioactivities. The first step of the pathway begins with the non-reducing polyketide synthase tazA that assembles one acetyl-CoA starter unit, five malonyl-CoA units, and catalyzes a series of Claisen condensations, methylation, PT-mediated cyclization, and finally releases the first hexaketide precursor through the R-domain. The tazA product then undergoes reduction on its terminal ketone and the following pyran-ring formation by yet undetermined enzyme(s). Dehydration and enoyl reduction, possibly involving the trans-enoyl reductase tazE leads to the next intermediate. TazD is predicted as an acetyltransferase and might catalyze the acetylation steps leading to the synthesis of azaterrilone A. Azaterrilone A is not the final product of the taz pathway and both the highly reducing polyketide synthase tazB and the dual enzyme tazHJ catalyze late steps of the pathway, leading to the production of the 2 final stereoisomers that contain additional polyketide modification whose structures have still to be determined. This chain is FAD-linked oxidoreductase tazL, found in Aspergillus terreus (strain NIH 2624 / FGSC A1156).